A 161-amino-acid polypeptide reads, in one-letter code: RNA pyrophosphohydrolase (161 aa).

The region spanning 12-154 (PYRPGVGMMI…KRKLYQAVVK (143 aa)) is the Nudix hydrolase domain. Residues 46-67 (GGIVPGETPSIAAMREMLEEIG) carry the Nudix box motif.

This sequence belongs to the Nudix hydrolase family. RppH subfamily. The cofactor is a divalent metal cation.

In terms of biological role, accelerates the degradation of transcripts by removing pyrophosphate from the 5'-end of triphosphorylated RNA, leading to a more labile monophosphorylated state that can stimulate subsequent ribonuclease cleavage. The sequence is that of RNA pyrophosphohydrolase from Rickettsia rickettsii (strain Iowa).